We begin with the raw amino-acid sequence, 380 residues long: Cytochrome b (380 aa).

4 consecutive transmembrane segments (helical) span residues 34 to 54 (FGSL…LLAM), 78 to 99 (WLIR…FLHI), 114 to 134 (WNTG…GYVL), and 179 to 199 (FFAL…IHLT). The heme b site is built by His84 and His98. Heme b-binding residues include His183 and His197. His202 is a binding site for a ubiquinone. 4 helical membrane-spanning segments follow: residues 227–247 (IKDI…TLFS), 289–309 (LGGV…PFLH), 321–341 (LSQT…WIGS), and 348–368 (FIII…ILFP).

This sequence belongs to the cytochrome b family. As to quaternary structure, the cytochrome bc1 complex contains 11 subunits: 3 respiratory subunits (MT-CYB, CYC1 and UQCRFS1), 2 core proteins (UQCRC1 and UQCRC2) and 6 low-molecular weight proteins (UQCRH/QCR6, UQCRB/QCR7, UQCRQ/QCR8, UQCR10/QCR9, UQCR11/QCR10 and a cleavage product of UQCRFS1). This cytochrome bc1 complex then forms a dimer. Requires heme b as cofactor.

The protein localises to the mitochondrion inner membrane. In terms of biological role, component of the ubiquinol-cytochrome c reductase complex (complex III or cytochrome b-c1 complex) that is part of the mitochondrial respiratory chain. The b-c1 complex mediates electron transfer from ubiquinol to cytochrome c. Contributes to the generation of a proton gradient across the mitochondrial membrane that is then used for ATP synthesis. The protein is Cytochrome b (MT-CYB) of Alectoris graeca (Rock partridge).